Reading from the N-terminus, the 536-residue chain is 2-isopropylmalate synthase (536 aa).

In terms of domain architecture, Pyruvate carboxyltransferase spans 8-273; it reads VLIFDTTLRD…FFGRDPESPT (266 aa). Mn(2+) contacts are provided by Asp-17, His-208, His-210, and Asn-244. The segment at 408–536 is regulatory domain; it reads QLQLVQVSCG…PQHDLIKANL (129 aa).

Belongs to the alpha-IPM synthase/homocitrate synthase family. LeuA type 1 subfamily. As to quaternary structure, homodimer. Mn(2+) serves as cofactor.

Its subcellular location is the cytoplasm. The catalysed reaction is 3-methyl-2-oxobutanoate + acetyl-CoA + H2O = (2S)-2-isopropylmalate + CoA + H(+). It participates in amino-acid biosynthesis; L-leucine biosynthesis; L-leucine from 3-methyl-2-oxobutanoate: step 1/4. Its function is as follows. Catalyzes the condensation of the acetyl group of acetyl-CoA with 3-methyl-2-oxobutanoate (2-ketoisovalerate) to form 3-carboxy-3-hydroxy-4-methylpentanoate (2-isopropylmalate). The protein is 2-isopropylmalate synthase of Prochlorococcus marinus (strain MIT 9211).